We begin with the raw amino-acid sequence, 118 residues long: Large ribosomal subunit protein uL24c (118 aa).

This sequence belongs to the universal ribosomal protein uL24 family. Part of the 50S ribosomal subunit.

It is found in the plastid. The protein localises to the organellar chromatophore. In terms of biological role, one of two assembly initiator proteins, it binds directly to the 5'-end of the 23S rRNA, where it nucleates assembly of the 50S subunit. This Paulinella chromatophora protein is Large ribosomal subunit protein uL24c (rpl24).